The following is a 356-amino-acid chain: Probable L-asparaginase 4 (356 aa).

Positions 1 to 22 (MWGFIVTCGIFLVLLCQLRLLS) are cleaved as a signal peptide. Residues 36 to 356 (PNVTVFAMGG…RDIEGLFSIK (321 aa)) enclose the Asparaginase/glutaminase domain. N37 carries N-linked (GlcNAc...) asparagine glycosylation. Catalysis depends on T46, which acts as the O-isoaspartyl threonine intermediate. Residue N52 is glycosylated (N-linked (GlcNAc...) asparagine). Residues S93 and 126 to 127 (TD) each bind substrate. An N-linked (GlcNAc...) asparagine glycan is attached at N176.

The protein belongs to the asparaginase 1 family.

It is found in the secreted. It localises to the cell wall. It carries out the reaction L-asparagine + H2O = L-aspartate + NH4(+). The chain is Probable L-asparaginase 4 from Schizosaccharomyces pombe (strain 972 / ATCC 24843) (Fission yeast).